We begin with the raw amino-acid sequence, 209 residues long: Protease (209 aa).

Residues His60, Asp77, and Cys127 contribute to the active site.

This sequence belongs to the peptidase C5 family. Interacts with protease cofactor pVI-C; this interaction is necessary for protease activation.

The protein resides in the virion. It localises to the host nucleus. It carries out the reaction Cleaves proteins of the adenovirus and its host cell at two consensus sites: -Yaa-Xaa-Gly-Gly-|-Xaa- and -Yaa-Xaa-Gly-Xaa-|-Gly- (in which Yaa is Met, Ile or Leu, and Xaa is any amino acid).. Requires DNA and protease cofactor for maximal activation. Inside nascent virions, becomes partially activated by binding to the viral DNA, allowing it to cleave the cofactor that binds to the protease and fully activates it. Actin, like the viral protease cofactor, seems to act as a cofactor in the cleavage of cytokeratin 18 and of actin itself. Cleaves viral precursor proteins (pTP, pIIIa, pVI, pVII, pVIII, and pX) inside newly assembled particles giving rise to mature virions. Protease complexed to its cofactor slides along the viral DNA to specifically locate and cleave the viral precursors. Mature virions have a weakened organization compared to the unmature virions, thereby facilitating subsequent uncoating. Without maturation, the particle lacks infectivity and is unable to uncoat. Late in adenovirus infection, in the cytoplasm, may participate in the cytoskeleton destruction. Cleaves host cell cytoskeletal keratins K7 and K18. This is Protease from Homo sapiens (Human).